The following is a 224-amino-acid chain: UPF0111 protein CPn_0681/CP_0066/CPj0681/CpB0708 (224 aa).

It belongs to the UPF0111 family.

The sequence is that of UPF0111 protein CPn_0681/CP_0066/CPj0681/CpB0708 from Chlamydia pneumoniae (Chlamydophila pneumoniae).